The following is a 237-amino-acid chain: MRPSGRQTHEMRGVSIETGFTRHAEGSCLISMGETRVLCTASVEERVPPFLRNTGLGWVTAEYGMLPRATHTRGRREAAAGKQSGRTQEIQRLIGRSLRAGVDRVALGERQITIDCDVIQADGGTRCASITGAWVALRLAVNKLMKAGDIITDPLTDHVAAVSCGLYAGQPVLDLDYAEDSEAGTDANFVMTGSGGLIEVQGSAEGAPFSRNALNTLMDLAEVGVAELVAAQKAATS.

Phosphate-binding positions include Arg86 and Gly124–Arg126.

It belongs to the RNase PH family. As to quaternary structure, homohexameric ring arranged as a trimer of dimers.

The enzyme catalyses tRNA(n+1) + phosphate = tRNA(n) + a ribonucleoside 5'-diphosphate. Phosphorolytic 3'-5' exoribonuclease that plays an important role in tRNA 3'-end maturation. Removes nucleotide residues following the 3'-CCA terminus of tRNAs; can also add nucleotides to the ends of RNA molecules by using nucleoside diphosphates as substrates, but this may not be physiologically important. Probably plays a role in initiation of 16S rRNA degradation (leading to ribosome degradation) during starvation. This chain is Ribonuclease PH, found in Dinoroseobacter shibae (strain DSM 16493 / NCIMB 14021 / DFL 12).